The primary structure comprises 107 residues: Sperm-specific class P protein 34 (107 aa).

The segment at 1–26 (MINVDPPTGNYPATGGNSTHNITSES) is disordered. The MSP domain occupies 1–107 (MINVDPPTGN…GEIIVKLIAA (107 aa)). Over residues 15–25 (GGNSTHNITSE) the composition is skewed to polar residues.

In terms of tissue distribution, expressed at higher level in testis.

This is Sperm-specific class P protein 34 (ssp-34) from Caenorhabditis elegans.